We begin with the raw amino-acid sequence, 936 residues long: Protein NNF2 (936 aa).

The Lumenal segment spans residues methionine 1–leucine 41. Lysine 10 participates in a covalent cross-link: Glycyl lysine isopeptide (Lys-Gly) (interchain with G-Cter in ubiquitin). A helical transmembrane segment spans residues phenylalanine 42 to valine 62. Over alanine 63–serine 120 the chain is Cytoplasmic. Residues phenylalanine 121–tyrosine 141 form a helical membrane-spanning segment. The Lumenal portion of the chain corresponds to glycine 142–serine 245. Residues methionine 246 to proline 266 traverse the membrane as a helical segment. The Cytoplasmic portion of the chain corresponds to histidine 267–tyrosine 936. 3 disordered regions span residues arginine 297 to leucine 351, glycine 387 to serine 437, and threonine 512 to histidine 533. Positions serine 299–serine 308 are enriched in low complexity. Positions leucine 325–leucine 351 are enriched in polar residues. Composition is skewed to low complexity over residues threonine 394 to threonine 405 and serine 414 to asparagine 428. Residues threonine 512–asparagine 529 show a composition bias toward polar residues.

Its subcellular location is the endoplasmic reticulum membrane. This is Protein NNF2 (NNF2) from Saccharomyces cerevisiae (strain ATCC 204508 / S288c) (Baker's yeast).